The following is a 371-amino-acid chain: Transcription factor bHLH77 (371 aa).

3 disordered regions span residues 1 to 25 (MNMD…FGNG), 65 to 206 (SGGI…SLAE), and 352 to 371 (QSNN…KLEP). The span at 85-96 (SQPTTQESNKSS) shows a compositional bias: polar residues. Residues 128 to 142 (SPASSSLTASNSKVS) are compositionally biased toward low complexity. A compositionally biased stretch (basic and acidic residues) spans 165–190 (GVEKCDSKGDNKDDAKPPEAPKDYIH). The 51-residue stretch at 197–247 (QATDSHSLAERARREKISERMTLLQDLVPGCNRITGKAVMLDEIINYVQSL) folds into the bHLH domain.

In terms of assembly, homodimer. Interacts with IBH1. As to expression, expressed constitutively in roots, leaves, stems, and flowers.

It is found in the nucleus. This is Transcription factor bHLH77 (BHLH77) from Arabidopsis thaliana (Mouse-ear cress).